A 415-amino-acid polypeptide reads, in one-letter code: Isocitrate dehydrogenase [NADP] (415 aa).

NADP(+)-binding positions include 77–79 (TIT) and Arg84. Thr79 contacts substrate. Residues 96–102 (SPNGTIR), Arg111, and Arg134 each bind substrate. Asp254 serves as a coordination point for Mn(2+). Lys262 lines the NADP(+) pocket. Position 277 (Asp277) interacts with Mn(2+). Residues 312-317 (GTVTRH) and Asn330 each bind NADP(+).

The protein belongs to the isocitrate and isopropylmalate dehydrogenases family. In terms of assembly, heterodimer. The cofactor is Mg(2+). It depends on Mn(2+) as a cofactor.

The protein resides in the cytoplasm. It catalyses the reaction D-threo-isocitrate + NADP(+) = 2-oxoglutarate + CO2 + NADPH. Its function is as follows. May supply 2-oxoglutarate for amino acid biosynthesis and ammonia assimilation via the glutamine synthetase/glutamate synthase (GS/GOGAT) pathway. The chain is Isocitrate dehydrogenase [NADP] from Nicotiana tabacum (Common tobacco).